The following is a 472-amino-acid chain: Argininosuccinate lyase (472 aa).

Belongs to the lyase 1 family. Argininosuccinate lyase subfamily.

It is found in the cytoplasm. The catalysed reaction is 2-(N(omega)-L-arginino)succinate = fumarate + L-arginine. It participates in amino-acid biosynthesis; L-arginine biosynthesis; L-arginine from L-ornithine and carbamoyl phosphate: step 3/3. This Rhodococcus opacus (strain B4) protein is Argininosuccinate lyase.